Here is a 460-residue protein sequence, read N- to C-terminus: Keratin, type I cytoskeletal 27 (460 aa).

The head stretch occupies residues 1–83 (MSVRFSSASR…GNEHGLLSGN (83 aa)). The interval 84-119 (EKVTMQNLNDRLASYLDNVRALEEANADLEQKIKGW) is coil 1A. One can recognise an IF rod domain in the interval 84–399 (EKVTMQNLND…RLIDGEDGSC (316 aa)). Residues 120–141 (YEKFGPGSCRGLDHDYSRYFTV) form a linker 1 region. The interval 142–233 (IDDLRNQIIS…KNHEEEMKAL (92 aa)) is coil 1B. The linker 12 stretch occupies residues 234–256 (QCAAGGNVNVEMNAAPGVDLTVL). The segment at 257-395 (LNNMRAEYEA…ETYCRLIDGE (139 aa)) is coil 2. Residues 396-460 (DGSCAKSKGY…NVKSEQRVPS (65 aa)) are tail. Residues 435–460 (LSSRVHSVEEKSTKVNNVKSEQRVPS) are disordered. The span at 448 to 460 (KVNNVKSEQRVPS) shows a compositional bias: polar residues.

The protein belongs to the intermediate filament family. In terms of assembly, heterotetramer of two type I and two type II keratins. Interacts with KRT6A to form filaments.

Its subcellular location is the cytoplasm. Essential for the proper assembly of type I and type II keratin protein complexes and formation of keratin intermediate filaments in the inner root sheath (irs). In Bos taurus (Bovine), this protein is Keratin, type I cytoskeletal 27.